The chain runs to 267 residues: Hydroxypyruvate/pyruvate aldolase Bphyt_5830 (267 aa).

His48 (proton acceptor) is an active-site residue. A divalent metal cation-binding residues include Glu152 and Asp178.

Belongs to the HpcH/HpaI aldolase family. The cofactor is a divalent metal cation.

It catalyses the reaction D-glyceraldehyde + 3-hydroxypyruvate = 2-dehydro-D-galactonate. The enzyme catalyses D-glyceraldehyde + 3-hydroxypyruvate = (3R,4S,5R)-3,4,5,6-tetrahydroxy-2-oxohexanoate. The catalysed reaction is D-glyceraldehyde + pyruvate = 2-dehydro-3-deoxy-L-galactonate. Functionally, aldolase which can catalyze in vitro the aldolisation reaction between hydroxypyruvate (HPA) or pyruvate (PA) and D-glyceraldehyde (D-GA). The condensation of hydroxypyruvate and D-glyceraldehyde produces 2-dehydro-D-galactonate as the major product and (3R,4S,5R)-3,4,5,6-tetrahydroxy-2-oxohexanoate. The condensation of pyruvate and D-glyceraldehyde produces 2-dehydro-3-deoxy-L-galactonate. The sequence is that of Hydroxypyruvate/pyruvate aldolase Bphyt_5830 from Paraburkholderia phytofirmans (strain DSM 17436 / LMG 22146 / PsJN) (Burkholderia phytofirmans).